We begin with the raw amino-acid sequence, 37 residues long: Cytochrome b6-f complex subunit 5 (37 aa).

Residues 5–25 traverse the membrane as a helical segment; that stretch reads FLFGIVLGLIPVTLAGLFVTA.

This sequence belongs to the PetG family. In terms of assembly, the 4 large subunits of the cytochrome b6-f complex are cytochrome b6, subunit IV (17 kDa polypeptide, PetD), cytochrome f and the Rieske protein, while the 4 small subunits are PetG, PetL, PetM and PetN. The complex functions as a dimer.

The protein localises to the plastid. It localises to the chloroplast thylakoid membrane. Functionally, component of the cytochrome b6-f complex, which mediates electron transfer between photosystem II (PSII) and photosystem I (PSI), cyclic electron flow around PSI, and state transitions. PetG is required for either the stability or assembly of the cytochrome b6-f complex. This chain is Cytochrome b6-f complex subunit 5, found in Daucus carota (Wild carrot).